Here is a 245-residue protein sequence, read N- to C-terminus: Fibroblast growth factor 13 (245 aa).

The disordered stretch occupies residues Met-1–Thr-36. The interval Met-1–Pro-62 is mediates targeting to the nucleus. A mediates interaction with sodium channels region spans residues Lys-67–Val-201. The tubulin-binding domain necessary and sufficient for tubulin-binding stretch occupies residues Ser-157–Gln-164. Position 208 is a phosphoserine (Ser-208). A disordered region spans residues Thr-213–Thr-245. Residues Phe-215–Thr-245 show a composition bias toward polar residues.

It belongs to the heparin-binding growth factors family. In terms of assembly, interacts with SCN8A; regulates SCN8A activity. Interacts with SCN1A; may regulate SCN1A activity. Interacts with SCN5A; the interaction is direct and may regulate SNC5A density at membranes and function. May also interact with SCN2A and SCN11A. Interacts with MAPK8IP2; may regulate the MAPK8IP2 scaffolding activity. Post-translationally, may be phosphorylated. Detected in brain, eye and heart. In brain, the different isoforms display different patterns of expression. Expressed in brain and heart (at protein level). Isoform 3 is highly expressed in cardiac myocytes while isoform 1 is the most abundant in brain.

Its subcellular location is the cell projection. It is found in the filopodium. The protein resides in the growth cone. The protein localises to the dendrite. It localises to the cell membrane. Its subcellular location is the sarcolemma. It is found in the cytoplasm. The protein resides in the nucleus. Functionally, microtubule-binding protein which directly binds tubulin and is involved in both polymerization and stabilization of microtubules. Through its action on microtubules, may participate to the refinement of axons by negatively regulating axonal and leading processes branching. Plays a crucial role in neuron polarization and migration in the cerebral cortex and the hippocampus. Regulates voltage-gated sodium channel transport and function. May also play a role in MAPK signaling. Required for the development of axonal initial segment-targeting inhibitory GABAergic synapses made by chandelier neurons. In terms of biological role, seems not to be involved in neuroblast polarization and migration but regulates axon branching. The sequence is that of Fibroblast growth factor 13 from Mus musculus (Mouse).